The chain runs to 493 residues: Glutamate--tRNA ligase (493 aa).

Positions 10 to 20 match the 'HIGH' region motif; the sequence is PSPTGDPHVGT. Residues 251-255 carry the 'KMSKS' region motif; the sequence is KLSKR. Residue lysine 254 coordinates ATP.

The protein belongs to the class-I aminoacyl-tRNA synthetase family. Glutamate--tRNA ligase type 1 subfamily. Monomer.

It is found in the cytoplasm. It catalyses the reaction tRNA(Glu) + L-glutamate + ATP = L-glutamyl-tRNA(Glu) + AMP + diphosphate. Catalyzes the attachment of glutamate to tRNA(Glu) in a two-step reaction: glutamate is first activated by ATP to form Glu-AMP and then transferred to the acceptor end of tRNA(Glu). This Pseudomonas putida (strain GB-1) protein is Glutamate--tRNA ligase.